The primary structure comprises 190 residues: Subtilisin inhibitor CLSI-II (190 aa).

Cystine bridges form between Cys-44–Cys-88 and Cys-142–Cys-149.

It belongs to the protease inhibitor I3 (leguminous Kunitz-type inhibitor) family. As to quaternary structure, forms active dimers on storage in aqueous solution, possibly through formation of an intermolecular disulfide bond. Post-translationally, the N-terminal Asn is removed in about 50% of both the CLSI-II and CLSI-III chains.

The protein resides in the secreted. Functionally, inhibits subtilisin-type microbial serine proteases incuding proteinase K, subtilisin BPN', subtilisin Carlsberg and subtilisin E in a non-stoichiometric manner. Weakly inhibits A.oryzae protease and some metalloproteases including pronase E. Does not inhibit trypsin, chymotrypsin, S.griseus alkaline protease or A.lyticus lysyl endopeptidase. CLSI-II has a wider inhibitory specificity than CLSI-III. The chain is Subtilisin inhibitor CLSI-II from Canavalia lineata (Beach bean).